The chain runs to 273 residues: Epidermal growth factor-like protein 7 (273 aa).

A signal peptide spans 1–23 (MRGSQEVLLMWLLVLAVGGTEHA). In terms of domain architecture, EMI spans 27–104 (GRRVCAVRAH…TSGLPGACGA (78 aa)). Cystine bridges form between Cys-31–Cys-89, Cys-56–Cys-62, Cys-88–Cys-102, Cys-107–Cys-117, Cys-111–Cys-123, Cys-125–Cys-134, Cys-141–Cys-152, Cys-148–Cys-161, and Cys-163–Cys-176. The region spanning 103–135 (GAAICQPPCRNGGSCVQPGRCRCPAGWRGDTCQ) is the EGF-like 1 domain. The Cell attachment site signature appears at 130–132 (RGD). The region spanning 137 to 177 (DVDECSARRGGCPQRCVNTAGSYWCQCWEGHSLSADGTLCV) is the EGF-like 2; calcium-binding domain. Residues 192 to 219 (VDSAMKEEVQRLQSRVDLLEEKLQLVLA) adopt a coiled-coil conformation.

As to quaternary structure, interacts with ITGAV/ITGB3 in an RGD-dependent manner, increasing endothelial cell's motility.

The protein localises to the secreted. It is found in the extracellular space. Its function is as follows. Regulates vascular tubulogenesis in vivo. Inhibits platelet-derived growth factor (PDGF)-BB-induced smooth muscle cell migration and promotes endothelial cell adhesion to the extracellular matrix and angiogenesis. In Homo sapiens (Human), this protein is Epidermal growth factor-like protein 7 (EGFL7).